Reading from the N-terminus, the 758-residue chain is Solute carrier family 26 member 6 (758 aa).

The Cytoplasmic portion of the chain corresponds to Met-1–Ala-117. Residues Gly-118–Phe-138 traverse the membrane as a helical segment. At Gly-139 to Thr-187 the chain is on the extracellular side. A glycan (N-linked (GlcNAc) asparagine) is linked at Asn-174. Residues Leu-188–Val-208 traverse the membrane as a helical segment. Residues Thr-209–Thr-263 are Cytoplasmic-facing. A helical transmembrane segment spans residues Val-264 to Leu-284. At Asn-285 to Leu-292 the chain is on the extracellular side. The chain crosses the membrane as a helical span at residues Pro-293–Val-313. The Cytoplasmic portion of the chain corresponds to Lys-314–Glu-340. A helical transmembrane segment spans residues Leu-341–Ile-361. At Ser-362–Glu-380 the chain is on the extracellular side. The chain crosses the membrane as a helical span at residues Leu-381–Cys-401. Topologically, residues Ser-402–Gln-417 are cytoplasmic. A helical transmembrane segment spans residues Val-418–Phe-438. Topologically, residues Arg-439–Thr-485 are extracellular. A helical membrane pass occupies residues Ile-486–Val-506. Residues Val-507 to Leu-758 lie on the Cytoplasmic side of the membrane. An STAS domain is found at Glu-531–Ala-741. A disordered region spans residues Glu-585–Ser-608. The residue at position 751 (Ser-751) is a Phosphoserine.

As to quaternary structure, interacts (via C-terminal domain) with PDZK1 (via C-terminal PDZ domain); the interaction induces chloride and oxalate exchange transport. Interacts with CFTR, SLC26A3 and NHERF1. Interacts with AHCYL1; the interaction increases SLC26A6 activity. Post-translationally, N-glycosylated. Glycosylation at Asn-174 positively regulates its chloride oxalate exchanger activity. As to expression, expressed in kidney (at protein level). Expressed in spermatogenic cells. Expressed in intestine, kidney, testis, brain, muscle, heart, and stomach. Expressed in the submandibular and sublingual salivary glands. In terms of tissue distribution, highly expressed in stomach, kidney, heart and small intestine, low in the lung, liver, testis, brain, skeletal muscle and colon. Expressed in the heart.

Its subcellular location is the cell membrane. It localises to the apical cell membrane. The protein resides in the cytoplasmic vesicle membrane. It is found in the microsome. It carries out the reaction 2 hydrogencarbonate(in) + chloride(out) = 2 hydrogencarbonate(out) + chloride(in). The enzyme catalyses oxalate(in) + chloride(out) = oxalate(out) + chloride(in). The catalysed reaction is oxalate(in) + formate(out) = oxalate(out) + formate(in). It catalyses the reaction oxalate(in) + sulfate(out) = oxalate(out) + sulfate(in). It carries out the reaction formate(in) + chloride(out) = formate(out) + chloride(in). The enzyme catalyses sulfate(in) = sulfate(out). With respect to regulation, apical membrane chloride-bicarbonate exchange activity of the pancreatic duct is inhibited by 4,4'-diisothiocyanatostilbene-2,2'-disulfonic acid (DIDS). Oxalate secretion in the duodenum and chloride-formate exchange activity is inhibited by DIDS. Its activity is regulated as follows. Chloride-formate exchange activity and transcellular sulfate absorption is inhibited by 4,4'-diisothiocyanatostilbene-2,2'-disulfonic acid (DIDS). Its function is as follows. Apical membrane anion-exchanger with wide epithelial distribution that plays a role as a component of the pH buffering system for maintaining acid-base homeostasis. Acts as a versatile DIDS-sensitive inorganic and organic anion transporter that mediates the uptake of monovalent anions like chloride, bicarbonate, formate and hydroxyl ion and divalent anions like sulfate and oxalate. Functions in multiple exchange modes involving pairs of these anions, which include chloride-bicarbonate, chloride-oxalate, oxalate-formate, oxalate-sulfate and chloride-formate exchange. Apical membrane chloride-bicarbonate exchanger that mediates luminal chloride absorption and bicarbonate secretion by the small intestinal brush border membrane and contributes to intracellular pH regulation in the duodenal upper villous epithelium during proton-coupled peptide absorption, possibly by providing a bicarbonate import pathway. Its association with carbonic anhydrase CA2 forms a bicarbonate transport metabolon; hence maximizes the local concentration of bicarbonate at the transporter site. Also mediates intestinal chloride absorption and oxalate secretion, thereby preventing hyperoxaluria and calcium oxalate urolithiasis. Transepithelial oxalate secretion, chloride-formate, chloride-oxalate and chloride-bicarbonate transport activities in the duodenum are inhibited by PKC activation in a calcium-independent manner. The apical membrane chloride-bicarbonate exchanger also provides a major route for fluid and bicarbonate secretion into the proximal tubules of the kidney as well as into the proximal part of the interlobular pancreatic ductal tree, where it mediates electrogenic chloride-bicarbonate exchange with a chloride-bicarbonate stoichiometry of 1:2, and hence will dilute and alkalinize protein-rich acinar secretion. Also mediates the transcellular sulfate absorption and oxalate secretion across the apical membrane in the duodenum and the formate ion efflux at the apical brush border of cells in the proximal tubules of kidney. Plays a role in sperm capacitation by increasing intracellular pH. Functionally, mediates electrogenic chloride-bicarbonate exchange with a chloride-bicarbonate stoichiometry of 1:2. Also mediates exchange of chloride-formate and chloride-oxalate ions. Mediates transcellular sulfate absorption. This Mus musculus (Mouse) protein is Solute carrier family 26 member 6.